A 123-amino-acid chain; its full sequence is Small ribosomal subunit protein uS13 (123 aa).

The disordered stretch occupies residues 92-123 (RKGLPVRGQKTKTNARTRKGPKKLVGAKKKSK).

It belongs to the universal ribosomal protein uS13 family. In terms of assembly, part of the 30S ribosomal subunit. Forms a loose heterodimer with protein S19. Forms two bridges to the 50S subunit in the 70S ribosome.

Located at the top of the head of the 30S subunit, it contacts several helices of the 16S rRNA. In the 70S ribosome it contacts the 23S rRNA (bridge B1a) and protein L5 of the 50S subunit (bridge B1b), connecting the 2 subunits; these bridges are implicated in subunit movement. Contacts the tRNAs in the A and P-sites. The chain is Small ribosomal subunit protein uS13 from Clostridium kluyveri (strain NBRC 12016).